We begin with the raw amino-acid sequence, 355 residues long: MTEPIRLLIAASGTGGHLFPALALAQQLPDYEIIWLGVPDRLETTLVPRQYPLQTIPVEGFQGRPSLKTIKIGWNLLRSVFTVRKLIKSKKINAVATTGGYIAAPAIVAAKLCNIPVIFHESNFIPGKVTTWLGRWCDTVAIGFRGTAKYLPNCATVWISTPVREQFRQPQSLDLPIPPNRSLIVVAGGSQGAVTVNQQVRSCVPAWVNAGAFIVHLTGKNDPEAATFSHDHYLSLEFFDNMAALLQKADLAISRAGAGTLTELAVTQTPSILIPYPFAAENHQMYNAQVFVDAGAALMFAQKSLTAEQLEQAGLDLLQSPENLATMAKAAGTLADLDSAEQLAAIVRASVEKSR.

UDP-N-acetyl-alpha-D-glucosamine-binding positions include 14 to 16, N123, R164, S190, and Q284; that span reads TGG.

Belongs to the glycosyltransferase 28 family. MurG subfamily.

It is found in the cell inner membrane. It catalyses the reaction di-trans,octa-cis-undecaprenyl diphospho-N-acetyl-alpha-D-muramoyl-L-alanyl-D-glutamyl-meso-2,6-diaminopimeloyl-D-alanyl-D-alanine + UDP-N-acetyl-alpha-D-glucosamine = di-trans,octa-cis-undecaprenyl diphospho-[N-acetyl-alpha-D-glucosaminyl-(1-&gt;4)]-N-acetyl-alpha-D-muramoyl-L-alanyl-D-glutamyl-meso-2,6-diaminopimeloyl-D-alanyl-D-alanine + UDP + H(+). It participates in cell wall biogenesis; peptidoglycan biosynthesis. Its function is as follows. Cell wall formation. Catalyzes the transfer of a GlcNAc subunit on undecaprenyl-pyrophosphoryl-MurNAc-pentapeptide (lipid intermediate I) to form undecaprenyl-pyrophosphoryl-MurNAc-(pentapeptide)GlcNAc (lipid intermediate II). In Synechocystis sp. (strain ATCC 27184 / PCC 6803 / Kazusa), this protein is UDP-N-acetylglucosamine--N-acetylmuramyl-(pentapeptide) pyrophosphoryl-undecaprenol N-acetylglucosamine transferase.